The sequence spans 126 residues: Ribosome-binding factor A (126 aa).

This sequence belongs to the RbfA family. Monomer. Binds 30S ribosomal subunits, but not 50S ribosomal subunits or 70S ribosomes.

It is found in the cytoplasm. One of several proteins that assist in the late maturation steps of the functional core of the 30S ribosomal subunit. Associates with free 30S ribosomal subunits (but not with 30S subunits that are part of 70S ribosomes or polysomes). Required for efficient processing of 16S rRNA. May interact with the 5'-terminal helix region of 16S rRNA. The sequence is that of Ribosome-binding factor A from Nitrosospira multiformis (strain ATCC 25196 / NCIMB 11849 / C 71).